Reading from the N-terminus, the 499-residue chain is Pyruvate kinase (499 aa).

Arginine 50 contributes to the substrate binding site. K(+)-binding residues include asparagine 52, serine 54, aspartate 84, and threonine 85. 52–55 (NFSH) lines the ATP pocket. Residue arginine 91 coordinates ATP. Mg(2+) is bound at residue glutamate 241. 3 residues coordinate substrate: glycine 264, aspartate 265, and threonine 297. Aspartate 265 is a binding site for Mg(2+).

Belongs to the pyruvate kinase family. As to quaternary structure, homotetramer. Mg(2+) serves as cofactor. Requires K(+) as cofactor.

The catalysed reaction is pyruvate + ATP = phosphoenolpyruvate + ADP + H(+). The protein operates within carbohydrate degradation; glycolysis; pyruvate from D-glyceraldehyde 3-phosphate: step 5/5. Activated by fructose 2,6-bisphosphate, activated by the effector in a non cooperative manner. This Leishmania mexicana protein is Pyruvate kinase (PYK).